A 501-amino-acid polypeptide reads, in one-letter code: Phosphoethanolamine N-methyltransferase 1 (501 aa).

S-adenosyl-L-homocysteine-binding residues include glycine 72, arginine 77, aspartate 93, aspartate 118, valine 119, and asparagine 137. Phosphocholine contacts are provided by serine 170, threonine 175, glycine 176, arginine 180, and tyrosine 187. Residues 256-257 and tyrosine 265 contribute to the N-methylethanolamine phosphate site; that span reads QY. A phosphocholine-binding site is contributed by tyrosine 265. Residues valine 274, serine 275, glycine 301, aspartate 323, aspartate 349, cysteine 350, and arginine 366 each contribute to the S-adenosyl-L-homocysteine site. Residues tyrosine 397, tyrosine 411, arginine 415, tyrosine 417, and lysine 483 each coordinate phosphocholine. N-methylethanolamine phosphate is bound by residues tyrosine 397, tyrosine 411, 415–417, and lysine 483; that span reads RGY.

Belongs to the class I-like SAM-binding methyltransferase superfamily. PEAMT family.

It catalyses the reaction phosphoethanolamine + S-adenosyl-L-methionine = N-methylethanolamine phosphate + S-adenosyl-L-homocysteine + H(+). It carries out the reaction N-methylethanolamine phosphate + S-adenosyl-L-methionine = N,N-dimethylethanolamine phosphate + S-adenosyl-L-homocysteine + H(+). The catalysed reaction is N,N-dimethylethanolamine phosphate + S-adenosyl-L-methionine = phosphocholine + S-adenosyl-L-homocysteine + H(+). Its pathway is phospholipid metabolism; phosphatidylcholine biosynthesis; phosphocholine from phosphoethanolamine: step 1/1. Functionally, involved in phosphocholine biosynthesis. Catalyzes the N-methylation of phosphoethanolamine, phosphomonomethylethanolamine and phosphodimethylethanolamine, the three methylation steps required to convert phosphoethanolamine to phosphocholine (PC). May be involved in root development. In Zea mays (Maize), this protein is Phosphoethanolamine N-methyltransferase 1.